A 332-amino-acid chain; its full sequence is MSTKEKLISHVSKEEAVGSRNKVTVVGVGMVGMASAISILLKDLCDELALVDVMEDKLKGEVMDLQHGSLFLKTHKIVGDKDYSVTANSRVVVVTAGARQQEGESRLNLVQRNVNIFKFIIPNIVKYSPNCILMVVSNPVDILTYVAWKLSGFPRHRVIGSGTNLDSARFRHIMGEKLHLHPSSCHGWIVGEHGDSSVPVWSGVNVAGVSLQTLNPKMGAEGDSENWKAVHKMVVDGAYEVIKLKGYTSWAIGMSVADLVESIVKNLHKVHPVSTLVKGMHGVKDEVFLSVPCVLGNSGLTDVIHMTLKADEEKQLVKSAETLWGVQKELTL.

NAD(+) contacts are provided by residues 29–57 (GMVGMASAISILLKDLCDELALVDVMEDK) and Arg99. Positions 106, 138, and 169 each coordinate substrate. Position 138 (Asn138) interacts with NAD(+). Catalysis depends on His193, which acts as the Proton acceptor. Thr248 contributes to the substrate binding site.

It belongs to the LDH/MDH superfamily. LDH family. Homotetramer.

Its subcellular location is the cytoplasm. The enzyme catalyses (S)-lactate + NAD(+) = pyruvate + NADH + H(+). Its pathway is fermentation; pyruvate fermentation to lactate; (S)-lactate from pyruvate: step 1/1. In terms of biological role, interconverts simultaneously and stereospecifically pyruvate and lactate with concomitant interconversion of NADH and NAD(+). The polypeptide is L-lactate dehydrogenase A chain (ldha) (Rhinogobiops nicholsii (Blackeye goby)).